The sequence spans 309 residues: DSC E3 ubiquitin ligase complex subunit C (309 aa).

Asn-61 is a glycosylation site (N-linked (GlcNAc...) asparagine). Disordered stretches follow at residues 88–110 and 148–177; these read LPPS…GKGK and EQAD…FDRL. Transmembrane regions (helical) follow at residues 257–277 and 289–309; these read DDML…AMWL and GLAV…RIMN.

The protein belongs to the dsc3 family. Component of the DSC E3 ubiquitin ligase complex composed of dscA, dscB, dscC and dscD.

It localises to the endoplasmic reticulum membrane. The protein operates within protein modification; protein ubiquitination. Functionally, component of the DSC E3 ubiquitin ligase complex which is required for the srbA transcriptional activator proteolytic cleavage to release the soluble transcription factor from the membrane in low oxygen or sterol conditions. Required for growth during hypoxia and triazole drug susceptibility, as well as for virulence in a murine model of invasive pulmonary aspergillosis (IPA). In Aspergillus fumigatus (strain ATCC MYA-4609 / CBS 101355 / FGSC A1100 / Af293) (Neosartorya fumigata), this protein is DSC E3 ubiquitin ligase complex subunit C.